Consider the following 1241-residue polypeptide: DNA-directed RNA polymerase subunit beta (1241 aa).

It belongs to the RNA polymerase beta chain family. As to quaternary structure, the RNAP catalytic core consists of 2 alpha, 1 beta, 1 beta' and 1 omega subunit. When a sigma factor is associated with the core the holoenzyme is formed, which can initiate transcription.

The enzyme catalyses RNA(n) + a ribonucleoside 5'-triphosphate = RNA(n+1) + diphosphate. DNA-dependent RNA polymerase catalyzes the transcription of DNA into RNA using the four ribonucleoside triphosphates as substrates. The polypeptide is DNA-directed RNA polymerase subunit beta (Clostridium botulinum (strain Alaska E43 / Type E3)).